A 516-amino-acid polypeptide reads, in one-letter code: uncharacterized protein (516 aa).

Positions 1–35 are disordered; sequence MAERTSESSSESASFDLEKQQSNHHDRYQSSVSSE. The span at 16–28 shows a compositional bias: basic and acidic residues; that stretch reads DLEKQQSNHHDRY. Ser-31 is subject to Phosphoserine. 12 helical membrane passes run 77–97, 111–131, 143–163, 166–186, 198–218, 231–251, 301–321, 345–365, 386–406, 412–432, 439–461, and 481–501; these read VAVM…FSGA, VALL…VVWA, MIIA…AKDI, VMIC…TVAG, GLVI…SPIV, WTSY…IIFH, LLIF…VYGI, SLPY…VALF, LPSM…LAWT, IHWI…ITIF, IIDC…RSSF, and AGSL…MLFL.

This sequence belongs to the major facilitator superfamily.

It localises to the membrane. This is an uncharacterized protein from Schizosaccharomyces pombe (strain 972 / ATCC 24843) (Fission yeast).